The following is a 1071-amino-acid chain: MEPLPLENEDNQLNSNKSTTVSSKNFSNIFHNNIHNKDVVGLTDMCFLENVEENELMNNLQNRFNKDHIYTYIGEQVISVNPFSNKANIYTEQVLKSYQNMYMYEVSPHIYALAQDTYKKLLLSKESQCVIITGESGSGKTEASKIFLNYISKVCSGNLENIQGIMRLIIESNIVLESFGNAKTLRNDNSSRFGKFIEIEFDGKGSPISGKISQFLLEKSRVHSRAIGERSFHVFYQFLTDKRITSKLGLSNDPTQYKYLKDSMCFSISSINDSKDFQKVLESLKQLAWTEQEMESIWRVLGAILLIGNIEFSNDVEKSNVDAVYISTPETLKKVSQLLQCSEDSLEKSLISRSLTLGAGKRQSSIKVLLNQTQAKETRDAFSKVLYDRLFTSIIDKINSTISSKSNNGSNYIIESTIGILDIYGFEIFENNSFEQFIINYSNEKLQQLFINLVLRQEQEEYLKEGIEWKTIDNYFDNTPIIDLIEGQPVGLLKLLEEACLIGQSTPELLIQKFNQFFSKNKHFESFETSNNLSIESQSFTLKHYASPVTYNLDSFIYKNKDPLYQDLIFTMESSKDKFILSLFNKDFQKNSLGVKKIPITAATQFKNAINDLIGKLNTCQPHYIRCIKSNEDKRSNHFDYEAVRHQVRYLNMLETIRVRKAGYCHKQHYTRFLGRYKMISKETWPFWNGTPKDGVMAIVRAASAIQNSTSECQFGKKKLFIKSASTLFHFEELRQKILPSIVITIQRVWRGYKVRKWYKQELQRLREEKEEIQKQIKRKNSANLIQTYYLRYKVLTYIKKLKPWSVGPHYNKGHIMPTLWLRRTPIDSLMQSIHIIWWAKVKVTSLSMEARSLVRQKILALDLFGMGYSRKKEWDCRRKFQADYLSDDSNPKKSQFSESVQAMFQKGGDKEILFADNVIKINKRGKSQLRSLIITDQHIYKYDTKKYTQKKVGLKLHSIVALSTSNKKDTFLAIHFKQPIRDLYIDLGCDFVEKVSEVCTNLVQQVYKLTGTTIPLVFRDPLTFNNSRDSRNNGTDFVVSFSQYPKGKEQRQSTFVKGKGNTAIVYYNLD.

The region spanning 40-736 (VGLTDMCFLE…TLFHFEELRQ (697 aa)) is the Myosin motor domain. 134 to 141 (GESGSGKT) lines the ATP pocket. An actin-binding region spans residues 610 to 632 (INDLIGKLNTCQPHYIRCIKSNE). Residues 739–768 (LPSIVITIQRVWRGYKVRKWYKQELQRLRE) form the IQ domain. Residues 870–1069 (SRKKEWDCRR…KGNTAIVYYN (200 aa)) form the TH1 domain.

It belongs to the TRAFAC class myosin-kinesin ATPase superfamily. Myosin family. In terms of assembly, myosin I heavy chain is single-headed. Dimer of a heavy and a light chain. Inability to self-assemble into filaments.

Its function is as follows. Myosin is a protein that binds to actin and has ATPase activity that is activated by actin. The polypeptide is Myosin IF heavy chain (myoF) (Dictyostelium discoideum (Social amoeba)).